Consider the following 238-residue polypeptide: Ribosomal RNA large subunit methyltransferase E (238 aa).

Residues glycine 85, tryptophan 87, aspartate 113, aspartate 129, and aspartate 153 each contribute to the S-adenosyl-L-methionine site. Catalysis depends on lysine 193, which acts as the Proton acceptor.

It belongs to the class I-like SAM-binding methyltransferase superfamily. RNA methyltransferase RlmE family.

Its subcellular location is the cytoplasm. The enzyme catalyses uridine(2552) in 23S rRNA + S-adenosyl-L-methionine = 2'-O-methyluridine(2552) in 23S rRNA + S-adenosyl-L-homocysteine + H(+). Specifically methylates the uridine in position 2552 of 23S rRNA at the 2'-O position of the ribose in the fully assembled 50S ribosomal subunit. The chain is Ribosomal RNA large subunit methyltransferase E from Ruegeria sp. (strain TM1040) (Silicibacter sp.).